A 1984-amino-acid polypeptide reads, in one-letter code: Spermatogenesis-associated protein 31H1 (1984 aa).

Disordered regions lie at residues 448–467, 1045–1067, 1181–1287, 1326–1346, and 1439–1984; these read MGLT…TPGP, PMEE…QHSL, YRER…SDSK, RIGA…KPSQ, and QQPR…EATR. 3 stretches are compositionally biased toward polar residues: residues 450–463, 1058–1067, and 1205–1226; these read LTKS…SPGT, TRISESQHSL, and TQAS…QSPA. Basic and acidic residues predominate over residues 1238-1247; the sequence is SRPDLVEKTK. Polar residues-rich tracts occupy residues 1458 to 1471 and 1492 to 1508; these read TDSQ…TASV and RNET…TPGT. Basic and acidic residues-rich tracts occupy residues 1532–1558 and 1568–1579; these read DKLT…ERTR and SPSERSQRSSLE. A run of 3 repeats spans residues 1593–1600, 1601–1608, and 1609–1616. Positions 1593–1935 are 27 X 8 AA approximate tandem repeat of P-S-E-R-S-H-H-S; that stretch reads PSRKNHSSPS…CSPSERSRRS (343 aa). Low complexity predominate over residues 1599–1610; that stretch reads SSPSERSWRSPS. Residues 1620–1630 show a composition bias toward basic and acidic residues; that stretch reads RSCHSLSERGL. Basic residues predominate over residues 1636–1647; it reads RSHRGPSQRRHH. Tandem repeats lie at residues 1641 to 1648, 1649 to 1656, and 1657 to 1664. Basic and acidic residues predominate over residues 1648 to 1667; it reads SPSERSHRSPSERSHRSSSE. The segment covering 1668-1679 has biased composition (basic residues); it reads RRHRSPSQRSHR. Residues 1680–1691 are compositionally biased toward basic and acidic residues; it reads GPSERSHCSPSE. 19 tandem repeats follow at residues 1681-1688, 1689-1696, 1697-1704, 1705-1712, 1713-1720, 1721-1728, 1729-1736, 1737-1744, 1745-1752, 1753-1760, 1761-1768, 1769-1776, 1777-1784, 1785-1792, 1793-1800, 1801-1808, 1848-1855, 1864-1871, and 1880-1887. The segment covering 1692–1727 has biased composition (basic residues); the sequence is RRHRSPSQRSHRGPSERRHHSPSKRSHRSPARRSHR. Residues 1728–1869 show a composition bias toward basic and acidic residues; that stretch reads SPSERSHHSP…SRCSPSERRG (142 aa). Composition is skewed to basic and acidic residues over residues 1895–1917, 1928–1941, and 1949–1959; these read RTSE…EMRP, PSER…KEGL, and RPSHSLSRDFK. A run of 2 repeats spans residues 1921–1928 and 1929–1935. A compositionally biased stretch (polar residues) spans 1960 to 1969; sequence NQTTLLGTTH.

As to expression, expressed in sperm (at protein level).

The protein is Spermatogenesis-associated protein 31H1 of Homo sapiens (Human).